Consider the following 177-residue polypeptide: Large ribosomal subunit protein eL20 (177 aa).

This sequence belongs to the eukaryotic ribosomal protein eL20 family.

This is Large ribosomal subunit protein eL20 (RpL18A) from Drosophila melanogaster (Fruit fly).